The primary structure comprises 281 residues: Probable endonuclease 4 (281 aa).

Zn(2+)-binding residues include His-69, His-109, Glu-145, Asp-179, His-182, His-216, Asp-229, His-231, and Glu-261.

This sequence belongs to the AP endonuclease 2 family. Zn(2+) serves as cofactor.

It catalyses the reaction Endonucleolytic cleavage to 5'-phosphooligonucleotide end-products.. In terms of biological role, endonuclease IV plays a role in DNA repair. It cleaves phosphodiester bonds at apurinic or apyrimidinic (AP) sites, generating a 3'-hydroxyl group and a 5'-terminal sugar phosphate. The chain is Probable endonuclease 4 from Proteus mirabilis (strain HI4320).